A 196-amino-acid polypeptide reads, in one-letter code: Inosine triphosphate pyrophosphatase 2 (196 aa).

20-25 (TGNDGK) is an ITP binding site. E48 contacts Mg(2+). ITP-binding positions include K61, 77 to 78 (DT), K94, 153 to 156 (FGWD), K177, and 182 to 183 (PR).

Belongs to the HAM1 NTPase family. Homodimer. Requires Mg(2+) as cofactor. Mn(2+) serves as cofactor.

Its subcellular location is the cytoplasm. It catalyses the reaction ITP + H2O = IMP + diphosphate + H(+). The enzyme catalyses dITP + H2O = dIMP + diphosphate + H(+). It carries out the reaction XTP + H2O = XMP + diphosphate + H(+). In terms of biological role, pyrophosphatase that hydrolyzes non-canonical purine nucleotides such as inosine triphosphate (ITP), deoxyinosine triphosphate (dITP) or xanthosine 5'-triphosphate (XTP) to their respective monophosphate derivatives. The enzyme does not distinguish between the deoxy- and ribose forms. Probably excludes non-canonical purines from RNA and DNA precursor pools, thus preventing their incorporation into RNA and DNA and avoiding chromosomal lesions. This Trypanosoma cruzi (strain CL Brener) protein is Inosine triphosphate pyrophosphatase 2.